The following is a 588-amino-acid chain: Adenine deaminase (588 aa).

It belongs to the metallo-dependent hydrolases superfamily. Adenine deaminase family. As to quaternary structure, homodimer. It depends on Mn(2+) as a cofactor.

It catalyses the reaction adenine + H2O + H(+) = hypoxanthine + NH4(+). The protein is Adenine deaminase of Shigella sonnei (strain Ss046).